Here is an 85-residue protein sequence, read N- to C-terminus: Dynein light chain 1, cytoplasmic (85 aa).

Belongs to the dynein light chain family. As to quaternary structure, homodimer. Cytoplasmic dynein consists of two catalytic heavy chains (HCs) and a number of non-catalytic subunits which present intermediate chains (ICs), light intermediate chains (LICs) and light chains (LCs). Component of the nuclear pore complex (NPC). NPC constitutes the exclusive means of nucleocytoplasmic transport. NPCs allow the passive diffusion of ions and small molecules and the active, nuclear transport receptor-mediated bidirectional transport of macromolecules such as proteins, RNAs, ribonucleoparticles (RNPs), and ribosomal subunits across the nuclear envelope. Due to its 8-fold rotational symmetry, all subunits are present with 8 copies or multiples thereof.

Its subcellular location is the cytoplasm. It is found in the cytoskeleton. It localises to the nucleus. The protein resides in the nuclear pore complex. Acts as one of several non-catalytic accessory components of the cytoplasmic dynein complex that are thought to be involved in linking dynein to cargos and to adapter proteins that regulate dynein function. Cytoplasmic dynein 1 acts as a motor for the intracellular retrograde motility of vesicles and organelles along microtubules. May play a role in changing or maintaining the spatial distribution of cytoskeletal structures. Also a component of the nuclear pore complex. The chain is Dynein light chain 1, cytoplasmic (dlc2) from Schizosaccharomyces pombe (strain 972 / ATCC 24843) (Fission yeast).